We begin with the raw amino-acid sequence, 253 residues long: Imidazole glycerol phosphate synthase subunit HisF (253 aa).

Catalysis depends on residues Asp-11 and Asp-130.

It belongs to the HisA/HisF family. In terms of assembly, heterodimer of HisH and HisF.

It localises to the cytoplasm. The catalysed reaction is 5-[(5-phospho-1-deoxy-D-ribulos-1-ylimino)methylamino]-1-(5-phospho-beta-D-ribosyl)imidazole-4-carboxamide + L-glutamine = D-erythro-1-(imidazol-4-yl)glycerol 3-phosphate + 5-amino-1-(5-phospho-beta-D-ribosyl)imidazole-4-carboxamide + L-glutamate + H(+). Its pathway is amino-acid biosynthesis; L-histidine biosynthesis; L-histidine from 5-phospho-alpha-D-ribose 1-diphosphate: step 5/9. Functionally, IGPS catalyzes the conversion of PRFAR and glutamine to IGP, AICAR and glutamate. The HisF subunit catalyzes the cyclization activity that produces IGP and AICAR from PRFAR using the ammonia provided by the HisH subunit. This Clostridium beijerinckii (strain ATCC 51743 / NCIMB 8052) (Clostridium acetobutylicum) protein is Imidazole glycerol phosphate synthase subunit HisF.